The primary structure comprises 561 residues: MARKQPHSWLNAVLFGLLLILIHVWGQDSPESSSIRTTHTGQVRGKLDHVRDTKAGVHTFLGIPFAKAPVGPLRFAPPEDPEPWSGVRDGTSHPAMCLQNIDMLDEVGLTDMKMILSSIPMSEDCLYLNIYTPAHAHEGSNLPVMVCIHGGALVIGMASMCDGSLLAVNEDLVVVAIQYRLGVLGFFSTGDEHARGNWGYLDQVAALRWVQQNIAHFGGNPNRVTIFGVSAGGTSVSSHVISPMSQGLFHGAIMESGVALLPDLISETSETVSTTVAKLSGCEATDSETLVRCLRAKSGAEILVINKVFKMIPAVVDGEFLPRHPKELLASEDFHPVPSIIGVNTDEYCCTIPMVMGTAQIIKELSRENLQAVLKDTAAQMMLPPECGDLLMEEYMGNTDDPQTLQIQYAEMMGDFLFVIPALQVAHFQRSHAPVYFYEFQHAPSYFKNVRPPHVKADHADEVPFVFGSFFWGIKVDFTEEEKLLSRRMMKYWANFARHGNPNSEGLPYWPVLDHDEQYLQLDTQPAVDRALKARRLQFWTKTLPQKIQELNGAQKNHAEL.

An N-terminal signal peptide occupies residues 1-26; it reads MARKQPHSWLNAVLFGLLLILIHVWG. Residues Cys97 and Cys125 are joined by a disulfide bond. Ser230 (acyl-ester intermediate) is an active-site residue. Cysteines 282 and 293 form a disulfide. Residues Glu347 and His459 each act as charge relay system in the active site.

Belongs to the type-B carboxylesterase/lipase family. Expressed in liver, stomach and kidney.

It is found in the microsome. Its subcellular location is the endoplasmic reticulum. The catalysed reaction is all-trans-retinyl hexadecanoate + H2O = all-trans-retinol + hexadecanoate + H(+). The enzyme catalyses an O-acyl-(R)-carnitine + H2O = (R)-carnitine + a fatty acid + H(+). Its function is as follows. Hydrolase with high activity towards palmitoylcarnitine. Is also active with p-nitrophenylacetate and alpha-naphthylacetate. May also hydrolyze retinyl esters. In Rattus norvegicus (Rat), this protein is Acylcarnitine hydrolase.